A 999-amino-acid polypeptide reads, in one-letter code: Probable tape measure protein (999 aa).

The protein belongs to the skunalikevirus tape measure protein family.

The protein resides in the virion. In terms of biological role, probable tape measure protein. Serves as a base for tail tube protein polymerization and acts as a template for tail length determination. This is Probable tape measure protein from Lactococcus lactis (Lactococcus lactis bacteriophage SK1).